Reading from the N-terminus, the 476-residue chain is Tubulointerstitial nephritis antigen (476 aa).

N-linked (GlcNAc...) asparagine glycosylation is present at Asn-38. One can recognise an SMB domain in the interval 59-107 (RFGCCADRDDGCVTQFYEADALCYCDKFCERENSDCCPDYKSFCREEKG). Cystine bridges form between Cys-63–Cys-83 and Cys-87–Cys-94. Asn-175, Asn-314, Asn-360, and Asn-455 each carry an N-linked (GlcNAc...) asparagine glycan.

It belongs to the peptidase C1 family.

Its subcellular location is the secreted. The protein localises to the extracellular space. It is found in the extracellular matrix. It localises to the basement membrane. Its function is as follows. Mediates adhesion of proximal tubule epithelial cells via integrins alpha3-beta1 and alphaV-beta3. This is a non catalytic peptidase C1 family protein. This is Tubulointerstitial nephritis antigen (TINAG) from Bos taurus (Bovine).